The following is a 124-amino-acid chain: Small ribosomal subunit protein uS13 (124 aa).

Residues G95–R124 are disordered.

The protein belongs to the universal ribosomal protein uS13 family. Part of the 30S ribosomal subunit. Forms a loose heterodimer with protein S19. Forms two bridges to the 50S subunit in the 70S ribosome.

Located at the top of the head of the 30S subunit, it contacts several helices of the 16S rRNA. In the 70S ribosome it contacts the 23S rRNA (bridge B1a) and protein L5 of the 50S subunit (bridge B1b), connecting the 2 subunits; these bridges are implicated in subunit movement. Contacts the tRNAs in the A and P-sites. This chain is Small ribosomal subunit protein uS13, found in Mycolicibacterium smegmatis (strain ATCC 700084 / mc(2)155) (Mycobacterium smegmatis).